A 412-amino-acid polypeptide reads, in one-letter code: MHVFNFLLFYPIFMSIYWIVGSIYYFFIKEKPFNRSLLVKSEHQQVEGISFLLACYNESETVQDTLSSVLSLEYPEKEIIIINDGSSDNTAEIIYDFKKNHDFKFVDLEVNRGKANALNEGIKQASYEYVMCLDADTVIDDDAPFYMIEDFKKNPKLGAVTGNPRIRNKSSILGKIQTIEYASIIGCIKRSQSLAGAINTISGVFTLFKKSALKDVGYWDTDMITEDIAVSWKLHLFDYEIKYEPRALCWMLVPETIGGLWKQRVRWAQGGHEVLLRDFWPTIKTKKLSLYILMFEQIASITWVYIVLCYLSFLVITANILDYTYLKYSFSIFFFSSFTMTFINIIQFTVALFIDSRYEKKNIVGLIFLSWYPTLYWVINAAVVIMAFPKALKRKKGGYATWSSPDRGNIQR.

4 helical membrane passes run 7–28, 298–320, 332–354, and 364–386; these read LLFY…YFFI, IASI…TANI, IFFF…ALFI, and VGLI…VVIM.

The protein belongs to the glycosyltransferase 2 family.

The protein resides in the cell membrane. Its function is as follows. N-acetylglucosaminyltransferase that catalyzes the polymerization of single monomer units of UDP-N-acetylglucosamine to produce the linear homomer poly-beta-1,6-N-acetyl-D-glucosamine (PNAG, also referred to as PIA), a biofilm adhesin polysaccharide. Requires IcaD for full activity. The chain is Poly-beta-1,6-N-acetyl-D-glucosamine synthase (icaA) from Staphylococcus epidermidis (strain ATCC 35984 / DSM 28319 / BCRC 17069 / CCUG 31568 / BM 3577 / RP62A).